The following is a 404-amino-acid chain: Cytoplasmic tRNA 2-thiolation protein 2 (404 aa).

This sequence belongs to the CTU2/NCS2 family.

Its subcellular location is the cytoplasm. Its pathway is tRNA modification; 5-methoxycarbonylmethyl-2-thiouridine-tRNA biosynthesis. Plays a central role in 2-thiolation of mcm(5)S(2)U at tRNA wobble positions of tRNA(Lys), tRNA(Glu) and tRNA(Gln). May act by forming a heterodimer with NCS6/CTU1 that ligates sulfur from thiocarboxylated URM1 onto the uridine of tRNAs at wobble position. The chain is Cytoplasmic tRNA 2-thiolation protein 2 from Drosophila yakuba (Fruit fly).